Consider the following 560-residue polypeptide: Oxygen-dependent choline dehydrogenase (560 aa).

8-37 (DYIIIGAGSAGNVLATRLTEDADVSVLLLE) lines the FAD pocket. His-475 functions as the Proton acceptor in the catalytic mechanism.

Belongs to the GMC oxidoreductase family. FAD is required as a cofactor.

It catalyses the reaction choline + A = betaine aldehyde + AH2. The enzyme catalyses betaine aldehyde + NAD(+) + H2O = glycine betaine + NADH + 2 H(+). Its pathway is amine and polyamine biosynthesis; betaine biosynthesis via choline pathway; betaine aldehyde from choline (cytochrome c reductase route): step 1/1. Functionally, involved in the biosynthesis of the osmoprotectant glycine betaine. Catalyzes the oxidation of choline to betaine aldehyde and betaine aldehyde to glycine betaine at the same rate. The sequence is that of Oxygen-dependent choline dehydrogenase from Stenotrophomonas maltophilia (strain R551-3).